We begin with the raw amino-acid sequence, 660 residues long: Leucine-rich repeat transmembrane protein FLRT2 (660 aa).

Residues 1-35 form the signal peptide; that stretch reads MGLQTTKWPSHGAFFLKSWLIISLGLYSQVSKLLA. 2 cysteine pairs are disulfide-bonded: cysteine 36–cysteine 42 and cysteine 40–cysteine 49. Residues 36–63 form the LRRNT domain; sequence CPSVCRCDRNFVYCNERSLTSVPLGIPE. At 36 to 541 the chain is on the extracellular side; it reads CPSVCRCDRN…TTSHSMGSPF (506 aa). LRR repeat units lie at residues 64–85, 89–109, 110–131, 134–155, 160–181, 182–202, 205–225, 231–252, 253–274, and 277–298; these read GVTV…AELH, SVHT…NLPK, NVRV…ALAQ, KLEE…DGAF, SLKL…LPVD, LQEL…AFQN, SLER…AEGT, KLKE…LPGT, HLIR…AFSN, and KLER…VFDN. N-linked (GlcNAc...) asparagine glycosylation occurs at asparagine 202. Asparagine 298 is a glycosylation site (N-linked (GlcNAc...) asparagine). The 53-residue stretch at 310-362 folds into the LRRCT domain; it reads NPWFCDCSIKWVTEWLKYIPSSLNVRGFMCQGPEQVRGMAVRELNMNLLSCPT. Cystine bridges form between cysteine 314-cysteine 339 and cysteine 316-cysteine 360. The span at 373–409 shows a compositional bias: low complexity; it reads APSTASPTTQPPTLSIPNPSRSYTPPTPTTSKLPTIP. Positions 373 to 413 are disordered; the sequence is APSTASPTTQPPTLSIPNPSRSYTPPTPTTSKLPTIPDWDG. The Fibronectin type-III domain maps to 419-517; that stretch reads PPISERIQLS…ICSEATTHAS (99 aa). N-linked (GlcNAc...) asparagine glycosylation is found at asparagine 433 and asparagine 521. Residues 542–562 traverse the membrane as a helical segment; sequence LLAGLIGGAVIFVLVVLLSVF. Residues 563 to 660 lie on the Cytoplasmic side of the membrane; the sequence is CWHMHKKGRY…SVPDLEHCHT (98 aa).

In terms of assembly, self-associates (via leucine-rich repeats), giving rise to homooligomers. Interacts with FGFR1. Interacts with FGFR2. Interacts (via extracellular domain) with ADGRL1/LPHN1. Interacts (via extracellular domain) with ADGRL3 (via olfactomedin-like domain). Interacts (via extracellular domain) with UNC5D (via the first Ig-like domain). Can also interact (via extracellular domain) with UNC5B, but with much lower affinity. Interacts (via extracellular domain) with FN1. Post-translationally, N-glycosylated. Proteolytic cleavage in the juxtamembrane region gives rise to a soluble ectodomain. Cleavage is probably effected by a metalloprotease. In terms of tissue distribution, expressed in pancreas, skeletal muscle, brain, and heart.

It is found in the cell membrane. The protein localises to the endoplasmic reticulum membrane. Its subcellular location is the cell junction. The protein resides in the focal adhesion. It localises to the secreted. It is found in the extracellular space. The protein localises to the extracellular matrix. Its subcellular location is the microsome membrane. The protein resides in the synapse. It localises to the synaptosome. In terms of biological role, functions in cell-cell adhesion, cell migration and axon guidance. Mediates cell-cell adhesion via its interactions with ADGRL3 and probably also other latrophilins that are expressed at the surface of adjacent cells. May play a role in the migration of cortical neurons during brain development via its interaction with UNC5D. Mediates axon growth cone collapse and plays a repulsive role in neuron guidance via its interaction with UNC5D, and possibly also other UNC-5 family members. Plays a role in fibroblast growth factor-mediated signaling cascades. Required for normal organization of the cardiac basement membrane during embryogenesis, and for normal embryonic epicardium and heart morphogenesis. This is Leucine-rich repeat transmembrane protein FLRT2 (FLRT2) from Homo sapiens (Human).